The primary structure comprises 326 residues: ATP synthase subunit b 2 (326 aa).

Residues 2–22 (LIDWFTVVAQALNFLILVWLL) traverse the membrane as a helical segment. Composition is skewed to basic and acidic residues over residues 275–298 (QQGRKEGRAVQNWDKAESEIRKEN) and 306–326 (PPPEAKAKPKPEEPKPEIGSP). Residues 275 to 326 (QQGRKEGRAVQNWDKAESEIRKENLSPAKTEPPPEAKAKPKPEEPKPEIGSP) form a disordered region.

The protein belongs to the ATPase B chain family. In terms of assembly, F-type ATPases have 2 components, F(1) - the catalytic core - and F(0) - the membrane proton channel. F(1) has five subunits: alpha(3), beta(3), gamma(1), delta(1), epsilon(1). F(0) has three main subunits: a(1), b(2) and c(10-14). The alpha and beta chains form an alternating ring which encloses part of the gamma chain. F(1) is attached to F(0) by a central stalk formed by the gamma and epsilon chains, while a peripheral stalk is formed by the delta and b chains.

The protein localises to the cell inner membrane. F(1)F(0) ATP synthase produces ATP from ADP in the presence of a proton or sodium gradient. F-type ATPases consist of two structural domains, F(1) containing the extramembraneous catalytic core and F(0) containing the membrane proton channel, linked together by a central stalk and a peripheral stalk. During catalysis, ATP synthesis in the catalytic domain of F(1) is coupled via a rotary mechanism of the central stalk subunits to proton translocation. Functionally, component of the F(0) channel, it forms part of the peripheral stalk, linking F(1) to F(0). This Albidiferax ferrireducens (strain ATCC BAA-621 / DSM 15236 / T118) (Rhodoferax ferrireducens) protein is ATP synthase subunit b 2.